Consider the following 105-residue polypeptide: Large ribosomal subunit protein eL33 (105 aa).

It belongs to the eukaryotic ribosomal protein eL33 family.

In terms of biological role, the protein was found to bind to both initiator and elongator tRNAs and consequently was assigned to the P site or P and A site. The sequence is that of Large ribosomal subunit protein eL33 (rpl35a) from Dictyostelium discoideum (Social amoeba).